Reading from the N-terminus, the 138-residue chain is Large ribosomal subunit protein uL16 (138 aa).

Over residues 1–13 (MLQPSRRKYRKEQ) the composition is skewed to basic residues. Positions 1-20 (MLQPSRRKYRKEQKGRNTGL) are disordered.

The protein belongs to the universal ribosomal protein uL16 family. Part of the 50S ribosomal subunit.

Binds 23S rRNA and is also seen to make contacts with the A and possibly P site tRNAs. The polypeptide is Large ribosomal subunit protein uL16 (Bordetella avium (strain 197N)).